The sequence spans 69 residues: Brevinin-1CG1 (69 aa).

An N-terminal signal peptide occupies residues 1 to 22; that stretch reads MFTMKKSLLLLFFLGTINLSLC. A propeptide spans 23–43 (removed in mature form); the sequence is EQERNAEEERRDDDEMDVEVE. Cys-63 and Cys-69 are disulfide-bonded.

As to expression, expressed by the skin glands.

The protein resides in the secreted. Antimicrobial peptide. Active against Gram-positive bacteria R.rhodochrous X15 and B.licheniformis X39 and against Gram-negative bacterium E.coli ATCC 25922. Has antifungal activity against a slime mold isolate. Has weak hemolytic activity against human erythrocytes. This chain is Brevinin-1CG1, found in Amolops chunganensis (Chungan torrent frog).